Reading from the N-terminus, the 554-residue chain is Macrophage colony-stimulating factor 1 (554 aa).

Residues 1–32 (MTAPGAAGRCPPTTWLGSLLLLVCLLASRSIT) form the signal peptide. Residues 33–496 (EEVSEYCSHM…GSFSPQLQES (464 aa)) are Lumenal-facing. 3 disulfides stabilise this stretch: Cys-39-Cys-122, Cys-80-Cys-171, and Cys-134-Cys-178. 2 N-linked (GlcNAc...) asparagine glycosylation sites follow: Asn-154 and Asn-172. Residues 224-488 (EDSEGTEGSS…TGHERQSEGS (265 aa)) are disordered. Thr-266 carries the post-translational modification Phosphothreonine; by FAM20C. An O-linked (Xyl...) (chondroitin sulfate) serine glycan is attached at Ser-309. A compositionally biased stretch (low complexity) spans 344-354 (LSASSPLPASA). 2 O-linked (GalNAc...) threonine glycosylation sites follow: Thr-363 and Thr-365. Positions 404-433 (RISSLRPQGLSNPSTLSAQPQLSRSHSSGS) are enriched in polar residues. Residues 406-426 (SSLRPQGLSNPSTLSAQPQLS) are O-glycosylated at one site. The segment covering 440-453 (LEGRRSTRDRRSPA) has biased composition (basic and acidic residues). Residues 497–517 (VFHLLVPSVILVLLAVGGLLF) form a helical membrane-spanning segment. Residues 518 to 554 (YRWRRRSHQEPQRADSPLEQPEGSPLTQDDRQVELPV) are Cytoplasmic-facing. The interval 526 to 554 (QEPQRADSPLEQPEGSPLTQDDRQVELPV) is disordered. A compositionally biased stretch (basic and acidic residues) spans 545 to 554 (QDDRQVELPV).

As to quaternary structure, homodimer or heterodimer; disulfide-linked. Likely to exist in multiple forms: homodimer consisting of 2 identical 150-200 kDa proteoglycan subunits, heterodimer consisting of a 150-200 kDa proteoglycan subunit and a truncated 43 kDa subunit, and homodimer consisting of 2 identical 43 kDa subunits. Interacts with CSF1R. N-glycosylated. In terms of processing, O-glycosylated; contains chondroitin sulfate. O-glycosylated with core 1 or possibly core 8 glycans. Post-translationally, O-glycosylated.

It is found in the cell membrane. The protein resides in the secreted. The protein localises to the extracellular space. Functionally, cytokine that plays an essential role in the regulation of survival, proliferation and differentiation of hematopoietic precursor cells, especially mononuclear phagocytes, such as macrophages and monocytes. Promotes the release of pro-inflammatory chemokines, and thereby plays an important role in innate immunity and in inflammatory processes. Plays an important role in the regulation of osteoclast proliferation and differentiation, the regulation of bone resorption, and is required for normal bone development. Required for normal male and female fertility. Promotes reorganization of the actin cytoskeleton, regulates formation of membrane ruffles, cell adhesion and cell migration. Plays a role in lipoprotein clearance. The sequence is that of Macrophage colony-stimulating factor 1 (CSF1) from Homo sapiens (Human).